The primary structure comprises 96 residues: UPF0235 protein Sputw3181_1321 (96 aa).

It belongs to the UPF0235 family.

The protein is UPF0235 protein Sputw3181_1321 of Shewanella sp. (strain W3-18-1).